Reading from the N-terminus, the 213-residue chain is MKNYYLVDEKRKTPVSTWEKISQTFRRSVKLELFVGLFVMMRELLKRNNSATIKYPFEKVKLDNRYRAVHRLMRFIESENERCIGCGLCEKICISNCIRMETSLDENGRKKVGNYSINLGRCIYCGFCAEVCPELAIVHGTEYENAAEQRSYFGYKQDFLTPIDKLKNQVEFEGAGSLRKDADLLVVKTPNYYDVMIERALENQDTQEQGENK.

2 consecutive 4Fe-4S ferredoxin-type domains span residues 74–103 (RFIESENERCIGCGLCEKICISNCIRMETS) and 113–142 (GNYSINLGRCIYCGFCAEVCPELAIVHGTE). [4Fe-4S] cluster contacts are provided by Cys83, Cys86, Cys89, Cys93, Cys122, Cys125, Cys128, and Cys132.

It belongs to the complex I 23 kDa subunit family. In terms of assembly, NDH-1 is composed of 14 different subunits. Subunits NuoA, H, J, K, L, M, N constitute the membrane sector of the complex. [4Fe-4S] cluster is required as a cofactor.

It is found in the cell inner membrane. It carries out the reaction a quinone + NADH + 5 H(+)(in) = a quinol + NAD(+) + 4 H(+)(out). Functionally, NDH-1 shuttles electrons from NADH, via FMN and iron-sulfur (Fe-S) centers, to quinones in the respiratory chain. The immediate electron acceptor for the enzyme in this species is believed to be ubiquinone. Couples the redox reaction to proton translocation (for every two electrons transferred, four hydrogen ions are translocated across the cytoplasmic membrane), and thus conserves the redox energy in a proton gradient. This chain is NADH-quinone oxidoreductase subunit I, found in Campylobacter jejuni subsp. jejuni serotype O:6 (strain 81116 / NCTC 11828).